A 704-amino-acid chain; its full sequence is Penicillin-binding protein H (704 aa).

Residues 23–43 (FFLAVFVLFTALIFKLGVVQI) form a helical membrane-spanning segment. The segment at 197–223 (MNPNKSNSNGKNGALLDEKKNSSQRPK) is disordered. Residues 200-209 (NKSNSNGKNG) are compositionally biased toward low complexity. Basic and acidic residues predominate over residues 212–223 (LDEKKNSSQRPK). S415 acts as the Acyl-ester intermediate in catalysis.

Belongs to the transpeptidase family.

It localises to the cell membrane. It catalyses the reaction Preferential cleavage: (Ac)2-L-Lys-D-Ala-|-D-Ala. Also transpeptidation of peptidyl-alanyl moieties that are N-acyl substituents of D-alanine.. It functions in the pathway cell wall biogenesis; peptidoglycan biosynthesis. Its function is as follows. Involved in the polymerization of peptidoglycan. Plays a redundant role with PBP-2A (pbpA) in determining the rod shape of the cell during vegetative growth and spore outgrowth. This Bacillus subtilis (strain 168) protein is Penicillin-binding protein H.